The chain runs to 283 residues: Bis(5'-nucleosyl)-tetraphosphatase, symmetrical (283 aa).

Belongs to the Ap4A hydrolase family.

The enzyme catalyses P(1),P(4)-bis(5'-adenosyl) tetraphosphate + H2O = 2 ADP + 2 H(+). Its function is as follows. Hydrolyzes diadenosine 5',5'''-P1,P4-tetraphosphate to yield ADP. The chain is Bis(5'-nucleosyl)-tetraphosphatase, symmetrical from Serratia proteamaculans (strain 568).